A 156-amino-acid chain; its full sequence is Small ribosomal subunit protein uS7c (156 aa).

Belongs to the universal ribosomal protein uS7 family. As to quaternary structure, part of the 30S ribosomal subunit.

The protein resides in the plastid. It localises to the chloroplast. Its function is as follows. One of the primary rRNA binding proteins, it binds directly to 16S rRNA where it nucleates assembly of the head domain of the 30S subunit. This is Small ribosomal subunit protein uS7c (rps7) from Chara vulgaris (Common stonewort).